Consider the following 655-residue polypeptide: Squalene-tetrahymanol cyclase THC1 (655 aa).

Residues 1-20 form the signal peptide; that stretch reads MKKILIGLIIGLFLFSSVNA. N-linked (GlcNAc...) asparagine glycans are attached at residues asparagine 23, asparagine 44, asparagine 69, and asparagine 77. Residue aspartate 373 is the Proton donor of the active site. PFTB repeat units lie at residues 393–435 and 515–562; these read IPET…GIAN and VQNS…GLLA.

This sequence belongs to the terpene cyclase/mutase family.

The protein resides in the membrane. The enzyme catalyses tetrahymanol = squalene + H2O. With respect to regulation, 2,3-iminosqualene and N,N-dimethyldodecylamine~N-oxlde are effective inhibitors with IC(50) values of 50 and 30 nM, respectively. Functionally, squalene cyclase that catalyzes the oxygen-independent cyclization of squalene into tetrahymanol, a triterpenoid sterol with five cyclohexyl rings that is involved in membrane integrity, permeability and fluidity. The sequence is that of Squalene-tetrahymanol cyclase THC1 from Tetrahymena thermophila (strain SB210).